We begin with the raw amino-acid sequence, 1487 residues long: Protein cft1 (1487 aa).

Over residues 486-504 (DLDLDDEDLEDDDDDDLYG) the composition is skewed to acidic residues. The disordered stretch occupies residues 486–513 (DLDLDDEDLEDDDDDDLYGEESASPEQA).

The protein belongs to the CFT1 family.

Its subcellular location is the nucleus. Its function is as follows. RNA-binding component of the cleavage and polyadenylation factor (CPF) complex, which plays a key role in polyadenylation-dependent pre-mRNA 3'-end formation and cooperates with cleavage factors including the CFIA complex and hrp1/CFIB. Involved in poly(A) site recognition. May be involved in coupling transcription termination and mRNA 3'-end formation. This is Protein cft1 (paa-3) from Neurospora crassa (strain ATCC 24698 / 74-OR23-1A / CBS 708.71 / DSM 1257 / FGSC 987).